The following is a 196-amino-acid chain: ATP-dependent Clp protease proteolytic subunit (196 aa).

The active-site Nucleophile is the serine 96. Histidine 121 is an active-site residue.

The protein belongs to the peptidase S14 family. As to quaternary structure, fourteen ClpP subunits assemble into 2 heptameric rings which stack back to back to give a disk-like structure with a central cavity, resembling the structure of eukaryotic proteasomes.

The protein resides in the cytoplasm. It catalyses the reaction Hydrolysis of proteins to small peptides in the presence of ATP and magnesium. alpha-casein is the usual test substrate. In the absence of ATP, only oligopeptides shorter than five residues are hydrolyzed (such as succinyl-Leu-Tyr-|-NHMec, and Leu-Tyr-Leu-|-Tyr-Trp, in which cleavage of the -Tyr-|-Leu- and -Tyr-|-Trp bonds also occurs).. Functionally, cleaves peptides in various proteins in a process that requires ATP hydrolysis. Has a chymotrypsin-like activity. Plays a major role in the degradation of misfolded proteins. The protein is ATP-dependent Clp protease proteolytic subunit of Streptococcus agalactiae serotype III (strain NEM316).